The following is a 529-amino-acid chain: Ribonuclease Y (529 aa).

A helical transmembrane segment spans residues 4-24 (GLIYISLEVLVACLITALIMY). Residues 216–297 (LTTRIALPCS…NRIEEVYHRV (82 aa)) enclose the KH domain. Positions 342–435 (ALQHSKEVAL…VCAADALSAG (94 aa)) constitute an HD domain.

Belongs to the RNase Y family.

It is found in the cell membrane. Its function is as follows. Endoribonuclease that initiates mRNA decay. The sequence is that of Ribonuclease Y from Helicobacter pylori (strain HPAG1).